Consider the following 76-residue polypeptide: MGSIRPSNIKRIAEEIVDNNPGIFNEDFENNKKILSEMLKNSVTKKTMNAIAGYVTRYILKKKSKEKSEMEQLGLA.

The protein belongs to the eukaryotic ribosomal protein eS17 family.

The chain is Small ribosomal subunit protein eS17 from Picrophilus torridus (strain ATCC 700027 / DSM 9790 / JCM 10055 / NBRC 100828 / KAW 2/3).